The primary structure comprises 995 residues: Beta-agarase A (995 aa).

The N-terminal stretch at 1–20 (MKIKFLSAAIAASLALPLSA) is a signal peptide. The tract at residues 936 to 972 (GTNIGVSHSGPEAPDPGEPVDPPIDPPTPPTGGVTGG) is disordered. The span at 948-965 (APDPGEPVDPPIDPPTPP) shows a compositional bias: pro residues.

Belongs to the glycosyl hydrolase 50 family.

It catalyses the reaction Hydrolysis of (1-&gt;4)-beta-D-galactosidic linkages in agarose, giving the tetramer as the predominant product.. Hydrolyzes agarose and also neoagarotetraose to yield neoagarobiose. The polypeptide is Beta-agarase A (agaA) (Vibrio sp. (strain JT0107)).